The chain runs to 197 residues: C-type lectin domain family 3 member A (197 aa).

The signal sequence occupies residues 1 to 22; the sequence is MAKNGLVICILVITLLLDQTTS. 3 disulfides stabilise this stretch: C68-C78, C95-C191, and C167-C183. The 119-residue stretch at 74–192 folds into the C-type lectin domain; it reads VHKKCYLASE…CRSSKRYICE (119 aa).

In terms of tissue distribution, restricted to cartilage and breast. Also expressed in breast cancers.

The protein resides in the secreted. In terms of biological role, promotes cell adhesion to laminin-332 and fibronectin. This is C-type lectin domain family 3 member A (CLEC3A) from Homo sapiens (Human).